Here is a 65-residue protein sequence, read N- to C-terminus: Subtilisin inhibitor CLSI-I (65 aa).

This sequence belongs to the protease inhibitor I13 (potato type I serine protease inhibitor) family.

In terms of biological role, inhibits subtilisin-type microbial serine proteases including proteinase K, subtilisin BPN', subtilisin Carlsberg, subtilisin E, A.oryzae protease and S.griseus alkaline protease. Weakly inhibits pronase E. Does not inhibit trypsin or chymotrypsin. The chain is Subtilisin inhibitor CLSI-I from Canavalia lineata (Beach bean).